Reading from the N-terminus, the 210-residue chain is Orotate phosphoribosyltransferase (210 aa).

Residues Arg-94, Lys-98, His-100, and 120–128 (EDLISTGGS) contribute to the 5-phospho-alpha-D-ribose 1-diphosphate site. Position 124 (Ser-124) interacts with orotate.

The protein belongs to the purine/pyrimidine phosphoribosyltransferase family. PyrE subfamily. In terms of assembly, homodimer. The cofactor is Mg(2+).

It carries out the reaction orotidine 5'-phosphate + diphosphate = orotate + 5-phospho-alpha-D-ribose 1-diphosphate. Its pathway is pyrimidine metabolism; UMP biosynthesis via de novo pathway; UMP from orotate: step 1/2. In terms of biological role, catalyzes the transfer of a ribosyl phosphate group from 5-phosphoribose 1-diphosphate to orotate, leading to the formation of orotidine monophosphate (OMP). The protein is Orotate phosphoribosyltransferase of Bacillus cereus (strain G9842).